A 178-amino-acid chain; its full sequence is Deoxycytidylate deaminase (178 aa).

The 132-residue stretch at 14 to 145 folds into the CMP/dCMP-type deaminase domain; that stretch reads EWPEYFMAVA…EETTAARLLF (132 aa). His-84 serves as a coordination point for Zn(2+). The Proton donor role is filled by Glu-86. The Zn(2+) site is built by Cys-110 and Cys-113. Phosphoserine is present on Ser-174.

It belongs to the cytidine and deoxycytidylate deaminase family. In terms of assembly, homohexamer. The cofactor is Zn(2+).

It catalyses the reaction dCMP + H2O + H(+) = dUMP + NH4(+). The enzyme catalyses 5-hydroxymethyl-dCMP + H2O + H(+) = 5-hydroxymethyl-dUMP + NH4(+). Its activity is regulated as follows. Allosteric enzyme whose activity is greatly influenced by the end products of its metabolic pathway, dCTP and dTTP. Its function is as follows. Catalyzes the deamination of dCMP to dUMP, providing the nucleoside monophosphate substrate for the thymidylate synthase/TYMS. Also, part of a nucleotide salvage pathway that eliminates epigenetically modified 5-hydroxymethyl-dCMP (hmdCMP) in a two-step process entailing deamination to cytotoxic 5-hydroxymethyl-dUMP (hmdUMP), followed by its hydrolysis into 5-hydroxymethyluracil (hmU) and 2-deoxy-D-ribose 5-phosphate (deoxyribosephosphate). Catalyzes the first step in that pathway, the deamination of 5-hydroxymethyl-dCMP (hmdCMP). The polypeptide is Deoxycytidylate deaminase (Mus musculus (Mouse)).